Here is a 708-residue protein sequence, read N- to C-terminus: Capsid scaffolding protein (708 aa).

Catalysis depends on charge relay system residues H63, S132, and H157. Disordered stretches follow at residues 269–339 (ASAE…MSHP), 455–565 (HPSY…QQQR), and 593–619 (ALPSAASSSPTTTTVCTPTGELTSGGG). Residues 284–293 (PAAGARVPSS) show a composition bias toward low complexity. The span at 294 to 311 (SPSPPVEPPSPVQPPALP) shows a compositional bias: pro residues. The segment covering 326 to 339 (SPSEPAEAASMSHP) has biased composition (low complexity). Positions 333–352 (AASMSHPLSAAVPAATAPPG) are interaction with pAP. The segment covering 498–513 (KQHRHGGSGGHNKRRK) has biased composition (basic residues). Short sequence motifs (nuclear localization signal) lie at residues 510-515 (KRRKET) and 537-543 (RARKRLK). A compositionally biased stretch (low complexity) spans 593–611 (ALPSAASSSPTTTTVCTPT). The tract at residues 688–708 (PPKDMVDLNRRIFVAALNKLE) is interaction with major capsid protein.

It belongs to the herpesviridae capsid scaffolding protein family. As to quaternary structure, homomultimer. Interacts with major capsid protein. Exists in a monomer-dimer equilibrium with the dimer being the active species. Post-translationally, capsid scaffolding protein is cleaved by assemblin after formation of the spherical procapsid. As a result, the capsid obtains its mature, icosahedral shape. Cleavages occur at two or more sites: release (R-site) and maturation (M-site).

The protein localises to the host cytoplasm. Its subcellular location is the host nucleus. It catalyses the reaction Cleaves -Ala-|-Ser- and -Ala-|-Ala- bonds in the scaffold protein.. Its function is as follows. Acts as a scaffold protein by binding major capsid protein in the cytoplasm, inducing the nuclear localization of both proteins. Multimerizes in the nucleus such as major capsid protein forms the icosahedral T=16 capsid. Autocatalytic cleavage releases the assembly protein, and subsequently abolishes interaction with major capsid protein. Cleavages products are evicted from the capsid before or during DNA packaging. In terms of biological role, protease that plays an essential role in virion assembly within the nucleus. Catalyzes the cleavage of the assembly protein after formation of the spherical procapsid. By that cleavage, the capsid matures and gains its icosahedral shape. The cleavage sites seem to include -Ala-Ser-, -Ala-Ala-, as well as Ala-Thr bonds. Assemblin and cleavages products are evicted from the capsid before or during DNA packaging. Functionally, plays a major role in capsid assembly. Acts as a scaffold protein by binding major capsid protein. Multimerizes in the nucleus such as major capsid protein forms the icosahedral T=16 capsid. Cleaved by assemblin after capsid completion. The cleavages products are evicted from the capsid before or during DNA packaging. The protein is Capsid scaffolding protein (UL80) of Homo sapiens (Human).